The sequence spans 131 residues: ER membrane protein complex subunit 5 (131 aa).

Over 1-3 the chain is Cytoplasmic; that stretch reads MAP. Residues 4 to 22 form a helical membrane-spanning segment; the sequence is SLWKGLVGVGLFALAHAAF. Residues 23–43 are Lumenal-facing; that stretch reads SAAQHRSYMRLTEKEDESLPI. Residues 44 to 63 traverse the membrane as a helical segment; that stretch reads DIVLQTLLAFAVTCYGIVHI. At 64–131 the chain is on the cytoplasmic side; it reads AGEFKDMDAT…KLRKFDSLRR (68 aa). Serine 120 is modified (phosphoserine).

It belongs to the membrane magnesium transporter (TC 1.A.67) family. As to quaternary structure, component of the ER membrane protein complex (EMC). In terms of tissue distribution, abundant in heart muscle and kidney with lower levels in liver and brain and very little expression in intestine or colon. In kidney, highest levels in distal convoluted tubule.

It localises to the endoplasmic reticulum membrane. Its subcellular location is the golgi apparatus membrane. It is found in the early endosome membrane. In terms of biological role, part of the endoplasmic reticulum membrane protein complex (EMC) that enables the energy-independent insertion into endoplasmic reticulum membranes of newly synthesized membrane proteins. Preferentially accommodates proteins with transmembrane domains that are weakly hydrophobic or contain destabilizing features such as charged and aromatic residues. Involved in the cotranslational insertion of multi-pass membrane proteins in which stop-transfer membrane-anchor sequences become ER membrane spanning helices. It is also required for the post-translational insertion of tail-anchored/TA proteins in endoplasmic reticulum membranes. By mediating the proper cotranslational insertion of N-terminal transmembrane domains in an N-exo topology, with translocated N-terminus in the lumen of the ER, controls the topology of multi-pass membrane proteins like the G protein-coupled receptors. By regulating the insertion of various proteins in membranes, it is indirectly involved in many cellular processes. May be involved Mg(2+) transport. This chain is ER membrane protein complex subunit 5, found in Mus musculus (Mouse).